The sequence spans 331 residues: Type II secretion system protein K (331 aa).

A propeptide spans 1–9 (MPSCRRQGG) (leader sequence). The helical transmembrane segment at 8–27 (GGMALLVVLLILSVMVIIAS) threads the bilayer. Residues 28–331 (NMSGRLQLEL…MLRRLNGGAE (304 aa)) are Periplasmic-facing.

It belongs to the GSP K family. In terms of assembly, type II secretion is composed of four main components: the outer membrane complex, the inner membrane complex, the cytoplasmic secretion ATPase and the periplasm-spanning pseudopilus. Interacts with core component ExeG. Cleaved by prepilin peptidase.

It localises to the cell inner membrane. In terms of biological role, component of the type II secretion system required for the energy-dependent secretion of extracellular factors such as proteases and toxins from the periplasm. Plays a role in pseudopilus assembly and seems to control its length. Interacts with the pseudopilus tip complex that is critical for the recognition and binding of secretion substrates. The protein is Type II secretion system protein K (exeK) of Aeromonas hydrophila.